Consider the following 60-residue polypeptide: Large ribosomal subunit protein bL32 (60 aa).

It belongs to the bacterial ribosomal protein bL32 family.

This Clostridium acetobutylicum (strain ATCC 824 / DSM 792 / JCM 1419 / IAM 19013 / LMG 5710 / NBRC 13948 / NRRL B-527 / VKM B-1787 / 2291 / W) protein is Large ribosomal subunit protein bL32.